The chain runs to 435 residues: 3-phosphoshikimate 1-carboxyvinyltransferase (435 aa).

3-phosphoshikimate contacts are provided by K23, S24, and R28. K23 contributes to the phosphoenolpyruvate binding site. Phosphoenolpyruvate contacts are provided by G96 and R124. S167, S168, Q169, S196, E311, and H340 together coordinate 3-phosphoshikimate. Q169 is a binding site for phosphoenolpyruvate. The active-site Proton acceptor is E311. R344, R385, and K410 together coordinate phosphoenolpyruvate.

This sequence belongs to the EPSP synthase family. As to quaternary structure, monomer.

The protein localises to the cytoplasm. It catalyses the reaction 3-phosphoshikimate + phosphoenolpyruvate = 5-O-(1-carboxyvinyl)-3-phosphoshikimate + phosphate. It functions in the pathway metabolic intermediate biosynthesis; chorismate biosynthesis; chorismate from D-erythrose 4-phosphate and phosphoenolpyruvate: step 6/7. Its function is as follows. Catalyzes the transfer of the enolpyruvyl moiety of phosphoenolpyruvate (PEP) to the 5-hydroxyl of shikimate-3-phosphate (S3P) to produce enolpyruvyl shikimate-3-phosphate and inorganic phosphate. The sequence is that of 3-phosphoshikimate 1-carboxyvinyltransferase from Mycolicibacterium paratuberculosis (strain ATCC BAA-968 / K-10) (Mycobacterium paratuberculosis).